Consider the following 45-residue polypeptide: DVCDSLVDGRCIHNGCFCERDAPNGNCCDTDGCTARWWCPGTKWD.

4 cysteine pairs are disulfide-bonded: Cys3/Cys16, Cys11/Cys28, Cys18/Cys33, and Cys27/Cys39. Pro23 bears the 4-hydroxyproline mark. A 6'-bromotryptophan mark is found at Trp37 and Trp38. Pro40 carries the post-translational modification 4-hydroxyproline. Trp44 bears the 6'-bromotryptophan mark.

Expressed by the venom duct.

It localises to the secreted. Functionally, mu-conotoxins block voltage-gated sodium channels. This toxin reversibly blocks voltage-gated sodium channel in cephalopods, with no alteration in the voltage dependence of sodium conductance or on the kinetics of inactivation. The sequence is that of Mu-conotoxin-like Cal 12.1.2a from Californiconus californicus (California cone).